The following is a 216-amino-acid chain: Octanoyltransferase (216 aa).

One can recognise a BPL/LPL catalytic domain in the interval 31 to 205 (STTRDEVWLV…ELVTLLDYEQ (175 aa)). Substrate contacts are provided by residues 70–77 (RGGQVTYH), 137–139 (SLG), and 150–152 (GLA). The Acyl-thioester intermediate role is filled by Cys-168.

The protein belongs to the LipB family.

The protein resides in the cytoplasm. It carries out the reaction octanoyl-[ACP] + L-lysyl-[protein] = N(6)-octanoyl-L-lysyl-[protein] + holo-[ACP] + H(+). It functions in the pathway protein modification; protein lipoylation via endogenous pathway; protein N(6)-(lipoyl)lysine from octanoyl-[acyl-carrier-protein]: step 1/2. Catalyzes the transfer of endogenously produced octanoic acid from octanoyl-acyl-carrier-protein onto the lipoyl domains of lipoate-dependent enzymes. Lipoyl-ACP can also act as a substrate although octanoyl-ACP is likely to be the physiological substrate. The protein is Octanoyltransferase of Vibrio cholerae serotype O1 (strain ATCC 39315 / El Tor Inaba N16961).